Here is a 151-residue protein sequence, read N- to C-terminus: MVEAEVEVDVEIKSTADKFFMFSRRSQHASKATRYVQGCDLLEGEWGEVGSILLWKLTVDGEPKVSKDMIEAIDMKMNMIQWRVLEGPLKEEYNIFSKTMKVSPKQGGSGSVVKWNLKYERIDEKVAHLERLLQFFVECVNEIDQYLLSEG.

Belongs to the MLP family.

This chain is MLP-like protein 168 (MLP168), found in Arabidopsis thaliana (Mouse-ear cress).